Reading from the N-terminus, the 360-residue chain is Phosphoserine aminotransferase (360 aa).

Residue Arg41 coordinates L-glutamate. Positions 101, 152, 172, and 195 each coordinate pyridoxal 5'-phosphate. At Lys196 the chain carries N6-(pyridoxal phosphate)lysine. 237–238 (NT) is a pyridoxal 5'-phosphate binding site.

It belongs to the class-V pyridoxal-phosphate-dependent aminotransferase family. SerC subfamily. As to quaternary structure, homodimer. Pyridoxal 5'-phosphate serves as cofactor.

It is found in the cytoplasm. The catalysed reaction is O-phospho-L-serine + 2-oxoglutarate = 3-phosphooxypyruvate + L-glutamate. The enzyme catalyses 4-(phosphooxy)-L-threonine + 2-oxoglutarate = (R)-3-hydroxy-2-oxo-4-phosphooxybutanoate + L-glutamate. It functions in the pathway amino-acid biosynthesis; L-serine biosynthesis; L-serine from 3-phospho-D-glycerate: step 2/3. It participates in cofactor biosynthesis; pyridoxine 5'-phosphate biosynthesis; pyridoxine 5'-phosphate from D-erythrose 4-phosphate: step 3/5. Catalyzes the reversible conversion of 3-phosphohydroxypyruvate to phosphoserine and of 3-hydroxy-2-oxo-4-phosphonooxybutanoate to phosphohydroxythreonine. In Burkholderia vietnamiensis (strain G4 / LMG 22486) (Burkholderia cepacia (strain R1808)), this protein is Phosphoserine aminotransferase.